The following is a 715-amino-acid chain: Beta-galactosidase 9 (715 aa).

Positions 1-20 (MSGGAVAFLLLVAAAAVANA) are cleaved as a signal peptide. The Proton donor role is filled by Glu-178. Glu-247 (nucleophile) is an active-site residue.

The protein belongs to the glycosyl hydrolase 35 family.

It localises to the secreted. The protein resides in the extracellular space. Its subcellular location is the apoplast. The enzyme catalyses Hydrolysis of terminal non-reducing beta-D-galactose residues in beta-D-galactosides.. The protein is Beta-galactosidase 9 of Oryza sativa subsp. japonica (Rice).